A 561-amino-acid chain; its full sequence is Proline--tRNA ligase (561 aa).

This sequence belongs to the class-II aminoacyl-tRNA synthetase family. ProS type 1 subfamily. As to quaternary structure, homodimer.

It localises to the cytoplasm. It catalyses the reaction tRNA(Pro) + L-proline + ATP = L-prolyl-tRNA(Pro) + AMP + diphosphate. Catalyzes the attachment of proline to tRNA(Pro) in a two-step reaction: proline is first activated by ATP to form Pro-AMP and then transferred to the acceptor end of tRNA(Pro). As ProRS can inadvertently accommodate and process non-cognate amino acids such as alanine and cysteine, to avoid such errors it has two additional distinct editing activities against alanine. One activity is designated as 'pretransfer' editing and involves the tRNA(Pro)-independent hydrolysis of activated Ala-AMP. The other activity is designated 'posttransfer' editing and involves deacylation of mischarged Ala-tRNA(Pro). The misacylated Cys-tRNA(Pro) is not edited by ProRS. This is Proline--tRNA ligase from Wigglesworthia glossinidia brevipalpis.